The primary structure comprises 243 residues: Chalcone--flavanone isomerase (243 aa).

Substrate contacts are provided by threonine 50, asparagine 115, and serine 192.

This sequence belongs to the chalcone isomerase family.

The enzyme catalyses a chalcone = a flavanone.. The protein operates within secondary metabolite biosynthesis; flavonoid biosynthesis. Its function is as follows. Catalyzes the intramolecular cyclization of bicyclic chalcones into tricyclic (S)-flavanones. Responsible for the isomerization of 4,2',4',6'-tetrahydroxychalcone (also termed chalcone) into naringenin. The chain is Chalcone--flavanone isomerase (CHI) from Ipomoea batatas (Sweet potato).